The primary structure comprises 698 residues: Serotransferrin (698 aa).

The first 19 residues, 1–19 (MRFAVGALLACAALGLCLA), serve as a signal peptide directing secretion. Transferrin-like domains are found at residues 25–347 (VKWC…NQRE) and 360–683 (VKWC…NIRK). Intrachain disulfides connect Cys28–Cys67 and Cys38–Cys58. Arg42 bears the Dimethylated arginine mark. 2 residues coordinate Fe(3+): Asp82 and Tyr114. Intrachain disulfides connect Cys137–Cys213, Cys156–Cys350, Cys177–Cys193, Cys180–Cys196, Cys190–Cys198, Cys246–Cys260, Cys363–Cys395, and Cys373–Cys386. Hydrogencarbonate is bound by residues Thr139, Arg143, Ala145, and Gly146. Tyr207 contacts Fe(3+). Position 268 (His268) interacts with Fe(3+). Phosphoserine is present on Ser388. Fe(3+) contacts are provided by Asp410 and Tyr447. 8 disulfide bridges follow: Cys420/Cys693, Cys435/Cys656, Cys471/Cys542, Cys495/Cys684, Cys505/Cys519, Cys516/Cys525, Cys582/Cys596, and Cys634/Cys639. Hydrogencarbonate contacts are provided by Thr473, Arg477, Ala479, and Gly480. N-linked (GlcNAc...) asparagine glycosylation is present at Asn512. Tyr536 provides a ligand contact to Fe(3+). Fe(3+) is bound at residue His604. Ser685 bears the Phosphoserine mark.

It belongs to the transferrin family. As to quaternary structure, monomer. Part of a complex composed of SLC40A1/ferroportin, TF/transferrin and HEPH/hephaestin that transfers iron from cells to transferrin. In terms of tissue distribution, expressed by the liver and secreted in plasma.

It localises to the secreted. Its function is as follows. Transferrins are iron binding transport proteins which can bind two Fe(3+) ions in association with the binding of an anion, usually bicarbonate. It is responsible for the transport of iron from sites of absorption and heme degradation to those of storage and utilization. Serum transferrin may also have a further role in stimulating cell proliferation. This is Serotransferrin (Tf) from Rattus norvegicus (Rat).